The chain runs to 226 residues: Survival motor neuron protein (226 aa).

The segment covering 35 to 44 has biased composition (basic and acidic residues); the sequence is ADSTNKREEE. A disordered region spans residues 35–68; it reads ADSTNKREEENAAAAEEEAGEISATGGATSPEPV. The Tudor domain occupies 69–128; it reads SFKVGDYARATYVDGVDYEGAVVSINEEKGTCVLRYLGYENEQEVLLVDLLPSWGKRVRR. The tract at residues 137-172 is disordered; it reads DEDEQLSRPKASAGSHSKTPKSSRRSRISGGLVMPP. A compositionally biased stretch (basic residues) spans 154-163; sequence KTPKSSRRSR. Residues 159–226 are required for homodimerization; sequence SRRSRISGGL…TSGKKKTPKK (68 aa).

The protein belongs to the SMN family. Homodimer (via C-terminal region). Component of the core survival motor neuron (SMN) complex composed of Smn, Gem2, Gem3, rig/Gem5 and one of 3 almost identical Gem4 paralogs encoded by Glos/Gem4a, Gem4b or Gem4c. Interacts with Gem3 (via C-terminus); the interaction is direct and stabilizes Smn. Part of a minimal SMN complex composed of Smn and Gem2 only; this complex is active in UsnRNP assembly. The SMN complex associates with the entire set of spliceosomal snRNP Sm proteins, SmB, SmD1, SmD2, SmD3, SmE, SmF and SmG, and with the snRNP-specific proteins snRNP-U1-70K, U2A, snf/U1A and U5-116KD. Interacts with Glos/Gem4a; the interaction is probably indirect. Interacts with Sbat and Vlet; Sbat and Vlet, along with Hez, may form an accessory subcomplex involved in SMN complex function. Interacts weakly with Gem3. Interacts with SmB and SmD1; the interaction is favored by methylation of the Sm proteins. Interacts with Actn; the interaction occurs in thoracic tissues and in adult flies. Interacts with Rpp20. Interacts with msk and Snup; these interactions are RNA-dependent. In late first instar larvae, expressed in pNBs. Expression increases as the pNBs enlarge, with the highest accumulation observed in dividing pNBs of second and third instar larvae. Enriched in type ID (thoracic and brain lobe), type IA and all the mira-expressing NBs of the brain lobes. In larvae, also expressed in muscle fibers. In larval and adult testis, expressed in germline stem cells and gonialblast, expression decreases as cells differentiate into cysts and spermatocytes. In adult fly thorax, expressed in the IFMs. In adult ovary, expressed in germline stem cells, cystoblasts, follicle cells, nurse cells and oocyte (at protein level). Also expressed in larval salivary glands.

The protein resides in the cytoplasm. The protein localises to the nucleus. It is found in the U-body. It localises to the gem. Its subcellular location is the cajal body. The protein resides in the myofibril. The protein localises to the sarcomere. It is found in the i band. It localises to the z line. Its function is as follows. Core component of the survival motor neuron (SMN) complex that plays an essential role in spliceosomal small nuclear ribonucleoprotein (snRNP) assembly in the cytoplasm, is required for pre-mRNA splicing in the nucleus and acts as a chaperone that discriminates target and non-target RNAs of Sm proteins. A major component of nuclear bodies known as gems (gemini of Cajal bodies) thought to be storage depots of excess SMN complexes. Required for normal expression of spliceosomal snRNAs and for U12 intron splicing. Required in cholinergic neurons, but not in motor neurons, to ensure correct splicing and proper levels of stas mRNA and normal neurotransmitter release by motor neurons. However, Smn is required in motor neurons, but not in cholinergic neurons, for normal motor behavior but plays no role in synaptic transmission according to a report. In both muscle and neurons, required for the formation of a normal neuromuscular junction (NMJ) structure. Plays a neuron-specific role in long-term homeostatic compensation at the larval NMJ. In the thorax of adult flies, required for Act88F, an indirect flight muscle (IFM)-specific actin, expression and for proper IFM myofibril formation. In nurse cells, oocytes and follicle cells, required to maintain normal organization of nuclear compartments including chromosomes, nucleoli, Cajal bodies, histone locus bodies and heterochromatin. Required for the functional integrity of the cytoplasmic U snRNP body (U body) and P body. Required in dividing postembryonic neuroblasts (pNBs) for the correct basal localization of mira. The tight regulation of its expression is critical for stem cell division, proliferation and differentiation in male germline and developing central nervous system (CNS). Required for tracheal terminal cell lumen formation. This is Survival motor neuron protein from Drosophila melanogaster (Fruit fly).